Here is a 505-residue protein sequence, read N- to C-terminus: Serine/threonine protein kinase OSK1 (505 aa).

Positions 14-266 constitute a Protein kinase domain; the sequence is YRIGKTLGIG…IREIREHQWF (253 aa). Residues 20-28 and Lys43 each bind ATP; that span reads LGIGSFGKV. The Proton acceptor role is filled by Asp137. One can recognise a UBA domain in the interval 287-327; sequence KLDDETLNDVINMGFDKNQLIESLHKRLQNEATVAYYLLLD. Residues 347-361 are compositionally biased toward polar residues; sequence SSLAQVTPAETPNSA. A disordered region spans residues 347–372; the sequence is SSLAQVTPAETPNSATDHRQHGHMES. The region spanning 456-504 is the KA1 domain; the sequence is SEKSTHTVKFEIQLYKTRDEKYLLDLQRVSGPQLLFLDLCSAFLTQLRV.

This sequence belongs to the protein kinase superfamily. Ser/Thr protein kinase family. Expressed in young roots, young shoots, flowers, and immature seeds. Mostly expressed in leaf sheaths and roots, and to a lower extent, in germinating seeds, leaf blades and panicles.

It localises to the nucleus. It carries out the reaction L-seryl-[protein] + ATP = O-phospho-L-seryl-[protein] + ADP + H(+). The catalysed reaction is L-threonyl-[protein] + ATP = O-phospho-L-threonyl-[protein] + ADP + H(+). In terms of biological role, serine/threonine-protein kinase involved in sugar signaling during germination and seedling growth. Negative regulators of sugar response complex (SRC) in alpha-amylase gene promoters, thus relieving SRC sugar repression in a MYBS1-dependent manner. Required for MYBS1 and AAMY3 accumulation under glucose starvation. The chain is Serine/threonine protein kinase OSK1 from Oryza sativa subsp. japonica (Rice).